The chain runs to 391 residues: Digeranylgeranylglycerophospholipid reductase (391 aa).

Residues G13, E32, C43, A44, G46, R97, A121, D277, G289, and I290 each contribute to the FAD site.

This sequence belongs to the geranylgeranyl reductase family. DGGGPL reductase subfamily. Requires FAD as cofactor.

The enzyme catalyses a 2,3-bis-O-phytanyl-sn-glycerol 1-phospholipid + 8 oxidized 2[4Fe-4S]-[ferredoxin] = a 2,3-bis-O-(geranylgeranyl)-sn-glycerol 1-phospholipid + 8 reduced 2[4Fe-4S]-[ferredoxin] + 16 H(+). It carries out the reaction 2,3-bis-O-(phytanyl)-sn-glycerol 1-phosphate + 8 oxidized 2[4Fe-4S]-[ferredoxin] = 2,3-bis-O-(geranylgeranyl)-sn-glycerol 1-phosphate + 8 reduced 2[4Fe-4S]-[ferredoxin] + 16 H(+). It catalyses the reaction a 2,3-bis-O-phytanyl-sn-glycerol 1-phospholipid + 8 A = a 2,3-bis-O-(geranylgeranyl)-sn-glycerol 1-phospholipid + 8 AH2. The catalysed reaction is CDP-2,3-bis-O-(geranylgeranyl)-sn-glycerol + 8 AH2 = CDP-2,3-bis-O-(phytanyl)-sn-glycerol + 8 A. The enzyme catalyses archaetidylserine + 8 AH2 = 2,3-bis-O-phytanyl-sn-glycero-3-phospho-L-serine + 8 A. The protein operates within membrane lipid metabolism; glycerophospholipid metabolism. In terms of biological role, is involved in the reduction of 2,3-digeranylgeranylglycerophospholipids (unsaturated archaeols) into 2,3-diphytanylglycerophospholipids (saturated archaeols) in the biosynthesis of archaeal membrane lipids. Catalyzes the formation of archaetidic acid (2,3-di-O-phytanyl-sn-glyceryl phosphate) from 2,3-di-O-geranylgeranylglyceryl phosphate (DGGGP) via the hydrogenation of each double bond of the isoprenoid chains. Is also probably able to reduce double bonds of geranyl groups in CDP-2,3-bis-O-(geranylgeranyl)-sn-glycerol and archaetidylserine, thus acting at various stages in the biosynthesis of archaeal membrane lipids. This Methanothrix thermoacetophila (strain DSM 6194 / JCM 14653 / NBRC 101360 / PT) (Methanosaeta thermophila) protein is Digeranylgeranylglycerophospholipid reductase.